Here is a 218-residue protein sequence, read N- to C-terminus: Recombination protein RecR (218 aa).

The C4-type zinc finger occupies 56–71 (CRICCNISREEVCRIC). The Toprim domain occupies 79-195 (STICVVEEPK…VVSRLASGMP (117 aa)).

Belongs to the RecR family.

Functionally, may play a role in DNA repair. It seems to be involved in an RecBC-independent recombinational process of DNA repair. It may act with RecF and RecO. The polypeptide is Recombination protein RecR (Corynebacterium diphtheriae (strain ATCC 700971 / NCTC 13129 / Biotype gravis)).